Consider the following 541-residue polypeptide: Eukaryotic translation initiation factor 3 subunit E (541 aa).

A PCI domain is found at Val-252–Pro-443. The interval Ala-466–Asn-541 is disordered. A compositionally biased stretch (gly residues) spans Asn-490–Asn-502. Positions Gln-506–Glu-522 are enriched in basic and acidic residues. Low complexity predominate over residues Ser-523–Asn-541.

The protein belongs to the eIF-3 subunit E family. As to quaternary structure, component of the eukaryotic translation initiation factor 3 (eIF-3) complex.

The protein localises to the cytoplasm. Its function is as follows. Component of the eukaryotic translation initiation factor 3 (eIF-3) complex, which is involved in protein synthesis of a specialized repertoire of mRNAs and, together with other initiation factors, stimulates binding of mRNA and methionyl-tRNAi to the 40S ribosome. The eIF-3 complex specifically targets and initiates translation of a subset of mRNAs involved in cell proliferation. This is Eukaryotic translation initiation factor 3 subunit E from Mycosarcoma maydis (Corn smut fungus).